The sequence spans 541 residues: Chaperonin GroEL 2 (541 aa).

Residues 29–32 (TLGP), 86–90 (DGTTT), Gly-413, 478–480 (NAA), and Asp-494 each bind ATP.

This sequence belongs to the chaperonin (HSP60) family. Forms a cylinder of 14 subunits composed of two heptameric rings stacked back-to-back. Interacts with the co-chaperonin GroES.

Its subcellular location is the cytoplasm. It carries out the reaction ATP + H2O + a folded polypeptide = ADP + phosphate + an unfolded polypeptide.. Functionally, together with its co-chaperonin GroES, plays an essential role in assisting protein folding. The GroEL-GroES system forms a nano-cage that allows encapsulation of the non-native substrate proteins and provides a physical environment optimized to promote and accelerate protein folding. In Corynebacterium jeikeium (strain K411), this protein is Chaperonin GroEL 2.